A 134-amino-acid chain; its full sequence is Large-conductance mechanosensitive channel (134 aa).

Transmembrane regions (helical) follow at residues 16–36 (VIDL…VTAL) and 84–104 (INTL…IKVI).

Belongs to the MscL family. In terms of assembly, homopentamer.

It localises to the cell inner membrane. In terms of biological role, channel that opens in response to stretch forces in the membrane lipid bilayer. May participate in the regulation of osmotic pressure changes within the cell. This is Large-conductance mechanosensitive channel from Stenotrophomonas maltophilia (strain R551-3).